A 428-amino-acid polypeptide reads, in one-letter code: Adenylosuccinate synthetase (428 aa).

Residues 12–18 and 40–42 each bind GTP; these read GDEGKGK and GHT. The active-site Proton acceptor is the D13. Mg(2+) contacts are provided by D13 and G40. Residues 13 to 16, 38 to 41, T130, R144, Q224, T239, and R303 contribute to the IMP site; these read DEGK and NAGH. H41 serves as the catalytic Proton donor. A substrate-binding site is contributed by 299–305; the sequence is VTTGRSR. GTP is bound by residues R305, 331–333, and 413–415; these read KID and GVG.

Belongs to the adenylosuccinate synthetase family. As to quaternary structure, homodimer. The cofactor is Mg(2+).

It localises to the cytoplasm. The catalysed reaction is IMP + L-aspartate + GTP = N(6)-(1,2-dicarboxyethyl)-AMP + GDP + phosphate + 2 H(+). The protein operates within purine metabolism; AMP biosynthesis via de novo pathway; AMP from IMP: step 1/2. Plays an important role in the de novo pathway of purine nucleotide biosynthesis. Catalyzes the first committed step in the biosynthesis of AMP from IMP. The polypeptide is Adenylosuccinate synthetase (Clostridium perfringens (strain 13 / Type A)).